A 104-amino-acid polypeptide reads, in one-letter code: DNA-directed RNA polymerase subunit omega (104 aa).

A disordered region spans residues 53-104 (EIESGNVTIHPDPEGKREAVRRRIEEEKRRKEEEEKKIKEQIAKEKEDGEKI). Over residues 63 to 104 (PDPEGKREAVRRRIEEEKRRKEEEEKKIKEQIAKEKEDGEKI) the composition is skewed to basic and acidic residues.

The protein belongs to the RNA polymerase subunit omega family. In terms of assembly, the RNAP catalytic core consists of 2 alpha, 1 beta, 1 beta' and 1 omega subunit. When a sigma factor is associated with the core the holoenzyme is formed, which can initiate transcription.

It catalyses the reaction RNA(n) + a ribonucleoside 5'-triphosphate = RNA(n+1) + diphosphate. In terms of biological role, promotes RNA polymerase assembly. Latches the N- and C-terminal regions of the beta' subunit thereby facilitating its interaction with the beta and alpha subunits. The polypeptide is DNA-directed RNA polymerase subunit omega (Streptococcus pneumoniae serotype 2 (strain D39 / NCTC 7466)).